A 674-amino-acid chain; its full sequence is DNA ligase (674 aa).

NAD(+) contacts are provided by residues 34-38 (DAEYD), 84-85 (SL), and Glu116. Lys118 (N6-AMP-lysine intermediate) is an active-site residue. NAD(+)-binding residues include Arg139, Glu174, Lys291, and Lys315. Residues Cys409, Cys412, Cys425, and Cys430 each contribute to the Zn(2+) site. The 89-residue stretch at 586–674 (REGEALKGLT…TGKDPRALTA (89 aa)) folds into the BRCT domain.

The protein belongs to the NAD-dependent DNA ligase family. LigA subfamily. Requires Mg(2+) as cofactor. Mn(2+) is required as a cofactor.

It catalyses the reaction NAD(+) + (deoxyribonucleotide)n-3'-hydroxyl + 5'-phospho-(deoxyribonucleotide)m = (deoxyribonucleotide)n+m + AMP + beta-nicotinamide D-nucleotide.. Functionally, DNA ligase that catalyzes the formation of phosphodiester linkages between 5'-phosphoryl and 3'-hydroxyl groups in double-stranded DNA using NAD as a coenzyme and as the energy source for the reaction. It is essential for DNA replication and repair of damaged DNA. The sequence is that of DNA ligase from Thermus sp. (strain AK16D).